Reading from the N-terminus, the 860-residue chain is Leucine--tRNA ligase (860 aa).

The 'HIGH' region motif lies at 42-52 (PYPSGRLHMGH). A 'KMSKS' region motif is present at residues 619–623 (KMSKS). Residue Lys-622 participates in ATP binding.

Belongs to the class-I aminoacyl-tRNA synthetase family.

It is found in the cytoplasm. It catalyses the reaction tRNA(Leu) + L-leucine + ATP = L-leucyl-tRNA(Leu) + AMP + diphosphate. This is Leucine--tRNA ligase from Pectobacterium atrosepticum (strain SCRI 1043 / ATCC BAA-672) (Erwinia carotovora subsp. atroseptica).